A 373-amino-acid polypeptide reads, in one-letter code: Histidinol-phosphate aminotransferase (373 aa).

At Lys230 the chain carries N6-(pyridoxal phosphate)lysine.

The protein belongs to the class-II pyridoxal-phosphate-dependent aminotransferase family. Histidinol-phosphate aminotransferase subfamily. In terms of assembly, homodimer. Requires pyridoxal 5'-phosphate as cofactor.

The catalysed reaction is L-histidinol phosphate + 2-oxoglutarate = 3-(imidazol-4-yl)-2-oxopropyl phosphate + L-glutamate. It functions in the pathway amino-acid biosynthesis; L-histidine biosynthesis; L-histidine from 5-phospho-alpha-D-ribose 1-diphosphate: step 7/9. The polypeptide is Histidinol-phosphate aminotransferase (Synechococcus elongatus (strain ATCC 33912 / PCC 7942 / FACHB-805) (Anacystis nidulans R2)).